Here is a 578-residue protein sequence, read N- to C-terminus: E3 ubiquitin-protein ligase Praja-1 (578 aa).

The disordered stretch occupies residues 1–298; it reads MSHQERIASQ…KVPRRRRTMA (298 aa). 2 stretches are compositionally biased toward basic and acidic residues: residues 57 to 67 and 107 to 116; these read DYSRYPPREYR and KFKDDPEKGA. Polar residues predominate over residues 151–163; it reads SKQNGSSASQISS. Thr231 is modified (phosphothreonine). 2 stretches are compositionally biased toward basic and acidic residues: residues 243–264 and 273–290; these read RWRD…RGRG and RYAE…ADKV. Phosphoserine is present on residues Ser317 and Ser319. A disordered region spans residues 332–397; sequence RSREQPQSSS…QASLEEGEIP (66 aa). Residues 359 to 373 are compositionally biased toward low complexity; that stretch reads AGAGSLASAGSNGSG. Residues 377–395 are compositionally biased toward acidic residues; the sequence is EVQDPSLQEEEQASLEEGE. The RING-type zinc-finger motif lies at 530 to 571; sequence CPICCSEYVKGEVATELPCHHYFHKPCVSIWLQKSGTCPVCR.

In terms of assembly, binds ubiquitin-conjugating enzymes (E2s). Binds, in vitro and in vivo, the MAGE conserved domain of MAGED1. Binds weakly Necdin, in vitro. Interacts with UBE2D2. Post-translationally, substrate for E2-dependent ubiquitination. Expressed in brain, liver, kidney. Highest levels in brain where it is found in many regions including cortical and subcortical areas and in neurons of the amygdala. Weak expression also found in testis. Also expressed in developing embryo.

It carries out the reaction S-ubiquitinyl-[E2 ubiquitin-conjugating enzyme]-L-cysteine + [acceptor protein]-L-lysine = [E2 ubiquitin-conjugating enzyme]-L-cysteine + N(6)-ubiquitinyl-[acceptor protein]-L-lysine.. Has E2-dependent E3 ubiquitin-protein ligase activity. Ubiquitinates MAGED1 antigen leading to its subsequent degradation by proteasome. May be involved in protein sorting. This chain is E3 ubiquitin-protein ligase Praja-1 (Pja1), found in Mus musculus (Mouse).